We begin with the raw amino-acid sequence, 325 residues long: Mitochondrial amidoxime-reducing component 1 (325 aa).

Topologically, residues 1-16 (MDLKEAFATIFDQNRK) are mitochondrial matrix. A helical; Signal-anchor for type II membrane protein transmembrane segment spans residues 17 to 36 (VALYAAGTTVAVLGLGLVFK). Residues 37–325 (YMRREEKLTR…VGEPVYKITY (289 aa)) lie on the Cytoplasmic side of the membrane. 3 residues coordinate Mo-molybdopterin: Lys59, Ser60, and Arg84. The segment at 85–175 (HWLVITEDGH…ADKPVRLVHY (91 aa)) is MOSC N-terminal region. One can recognise an MOSC domain in the interval 179 to 323 (LKPQRPHEKE…LHVGEPVYKI (145 aa)). Positions 230, 264, 265, and 305 each coordinate Mo-molybdopterin.

Requires Mo-molybdopterin as cofactor.

The protein resides in the mitochondrion outer membrane. It is found in the membrane. It carries out the reaction N(omega)-hydroxy-L-arginine + 2 Fe(II)-[cytochrome b5] + 2 H(+) = L-arginine + 2 Fe(III)-[cytochrome b5] + H2O. In terms of biological role, catalyzes the reduction of N-oxygenated molecules, acting as a counterpart of cytochrome P450 and flavin-containing monooxygenases in metabolic cycles. As a component of prodrug-converting system, reduces a multitude of N-hydroxylated prodrugs particularly amidoximes, leading to increased drug bioavailability. May be involved in mitochondrial N(omega)-hydroxy-L-arginine (NOHA) reduction, regulating endogenous nitric oxide levels and biosynthesis. Postulated to cleave the N-OH bond of N-hydroxylated substrates in concert with electron transfer from NADH to cytochrome b5 reductase then to cytochrome b5, the ultimate electron donor that primes the active site for substrate reduction. The protein is Mitochondrial amidoxime-reducing component 1 (mtarc1) of Danio rerio (Zebrafish).